The primary structure comprises 152 residues: UPF0336 protein Tfu_2666 (152 aa).

The region spanning 7–116 (YLGRAYELPE…TTITDIKSLA (110 aa)) is the MaoC-like domain.

Belongs to the UPF0336 family.

The chain is UPF0336 protein Tfu_2666 from Thermobifida fusca (strain YX).